Reading from the N-terminus, the 66-residue chain is Conotoxin Bu1.4 (66 aa).

The first 23 residues, 1–23, serve as a signal peptide directing secretion; the sequence is MGMRMRMMFTVFLLVVLANTVVS. Positions 24-46 are excised as a propeptide; sequence FPSDRDSDGADAEASDEPVEFER. Residues 25-48 are disordered; the sequence is PSDRDSDGADAEASDEPVEFERDE. The span at 32–42 shows a compositional bias: acidic residues; the sequence is GADAEASDEPV. 2 cysteine pairs are disulfide-bonded: cysteine 51-cysteine 57 and cysteine 52-cysteine 62. At threonine 63 the chain carries Threonine amide.

It belongs to the conotoxin A superfamily. As to expression, expressed by the venom duct.

It localises to the secreted. This is Conotoxin Bu1.4 from Conus bullatus (Bubble cone).